The chain runs to 306 residues: Non-specific ribonucleoside hydrolase RihC (306 aa).

Residue H235 is part of the active site.

This sequence belongs to the IUNH family. RihC subfamily.

In terms of biological role, hydrolyzes both purine and pyrimidine ribonucleosides with a broad-substrate specificity. The sequence is that of Non-specific ribonucleoside hydrolase RihC from Salmonella enteritidis PT4 (strain P125109).